The following is a 140-amino-acid chain: Phosphoribosyl-AMP cyclohydrolase (140 aa).

Asp84 contacts Mg(2+). A Zn(2+)-binding site is contributed by Cys85. Residues Asp86 and Asp88 each contribute to the Mg(2+) site. Cys101 and Cys108 together coordinate Zn(2+).

The protein belongs to the PRA-CH family. Homodimer. Requires Mg(2+) as cofactor. It depends on Zn(2+) as a cofactor.

The protein localises to the cytoplasm. The catalysed reaction is 1-(5-phospho-beta-D-ribosyl)-5'-AMP + H2O = 1-(5-phospho-beta-D-ribosyl)-5-[(5-phospho-beta-D-ribosylamino)methylideneamino]imidazole-4-carboxamide. It functions in the pathway amino-acid biosynthesis; L-histidine biosynthesis; L-histidine from 5-phospho-alpha-D-ribose 1-diphosphate: step 3/9. In terms of biological role, catalyzes the hydrolysis of the adenine ring of phosphoribosyl-AMP. The protein is Phosphoribosyl-AMP cyclohydrolase of Chloroherpeton thalassium (strain ATCC 35110 / GB-78).